The following is a 333-amino-acid chain: Adenosine deaminase (333 aa).

Zn(2+)-binding residues include His-12 and His-14. Positions 14, 16, and 170 each coordinate substrate. Zn(2+) is bound at residue His-197. Catalysis depends on Glu-200, which acts as the Proton donor. Asp-278 serves as a coordination point for Zn(2+). Residue Asp-279 participates in substrate binding.

It belongs to the metallo-dependent hydrolases superfamily. Adenosine and AMP deaminases family. Adenosine deaminase subfamily. It depends on Zn(2+) as a cofactor.

It carries out the reaction adenosine + H2O + H(+) = inosine + NH4(+). The catalysed reaction is 2'-deoxyadenosine + H2O + H(+) = 2'-deoxyinosine + NH4(+). Catalyzes the hydrolytic deamination of adenosine and 2-deoxyadenosine. The polypeptide is Adenosine deaminase (Aliivibrio fischeri (strain MJ11) (Vibrio fischeri)).